The sequence spans 507 residues: Cytochrome P450 71D2 (507 aa).

Helical transmembrane passes span 6 to 26 (LPFN…LIYG) and 447 to 467 (ICPG…LLLY). A heme-binding site is contributed by Cys-448.

The protein belongs to the cytochrome P450 family.

Its subcellular location is the membrane. The polypeptide is Cytochrome P450 71D2 (Catharanthus roseus (Madagascar periwinkle)).